Consider the following 107-residue polypeptide: MNWKEAEEKASRYLRHKGFKILARNYRTRFGEIDIIARYRGYLVFVEVKSGNSFFLPRTRVDLQKIRHIQLAANDYIMNTKDSFKGYRIDVIEVTEKGIEHFEDIQI.

It belongs to the UPF0102 family.

The protein is UPF0102 protein Tlet_0667 of Pseudothermotoga lettingae (strain ATCC BAA-301 / DSM 14385 / NBRC 107922 / TMO) (Thermotoga lettingae).